The chain runs to 735 residues: ATP-dependent DNA helicase Hel308 (735 aa).

ATP contacts are provided by residues Q32 and 50–57; that span reads APTGSGKT. The region spanning 37-201 is the Helicase ATP-binding domain; it reads QAGVEKGENL…WIGGKIVESS (165 aa). The short motif at 146 to 149 is the DEAH box element; sequence DEIH. The region spanning 235 to 431 is the Helicase C-terminal domain; that stretch reads DLDLAAEAIE…GLRGLRHFIL (197 aa).

Belongs to the helicase family. Hel308 subfamily. In terms of assembly, monomer.

The catalysed reaction is Couples ATP hydrolysis with the unwinding of duplex DNA by translocating in the 3'-5' direction.. The enzyme catalyses ATP + H2O = ADP + phosphate + H(+). In terms of biological role, DNA-dependent ATPase and 3'-5' DNA helicase that may be involved in repair of stalled replication forks. The polypeptide is ATP-dependent DNA helicase Hel308 (Aeropyrum pernix (strain ATCC 700893 / DSM 11879 / JCM 9820 / NBRC 100138 / K1)).